The following is a 605-amino-acid chain: Protein phosphatase 1D (605 aa).

Residues Met1–Phe101 form an interaction with CHEK1 region. Positions Gly8–Ile375 constitute a PPM-type phosphatase domain. The segment at Val28–Arg90 is disordered. 2 positions are modified to phosphoserine: Ser40 and Ser85. The Mn(2+) site is built by Asp105, Gly106, Asp314, and Asp366. A disordered region spans residues Ser516–Gly591. Composition is skewed to polar residues over residues Pro530 to Gly544 and Leu555 to Lys577. Residues Thr579–Lys588 show a composition bias toward basic residues.

It belongs to the PP2C family. Interacts with CHEK1 and CHEK2; dephosphorylates them. Interacts with MAPK14. Requires Mg(2+) as cofactor. The cofactor is Mn(2+). Expressed in fetal and adult brain. Also detected in fetal liver and skeletal muscle, but not in their adult counterparts.

It is found in the nucleus. Its subcellular location is the cytoplasm. It localises to the cytosol. The catalysed reaction is O-phospho-L-seryl-[protein] + H2O = L-seryl-[protein] + phosphate. The enzyme catalyses O-phospho-L-threonyl-[protein] + H2O = L-threonyl-[protein] + phosphate. Its function is as follows. Involved in the negative regulation of p53 expression. Required for the relief of p53-dependent checkpoint mediated cell cycle arrest. Binds to and dephosphorylates 'Ser-15' of TP53 and 'Ser-345' of CHEK1 which contributes to the functional inactivation of these proteins. Mediates MAPK14 dephosphorylation and inactivation. Is also an important regulator of global heterochromatin silencing and critical in maintaining genome integrity. This is Protein phosphatase 1D (PPM1D) from Homo sapiens (Human).